Reading from the N-terminus, the 302-residue chain is CRISPR-associated endonuclease Cas1 1 (302 aa).

Mn(2+)-binding residues include glutamate 159, histidine 219, and glutamate 234.

The protein belongs to the CRISPR-associated endonuclease Cas1 family. Homodimer, forms a heterotetramer with a Cas2 homodimer. Mg(2+) serves as cofactor. It depends on Mn(2+) as a cofactor.

Its function is as follows. CRISPR (clustered regularly interspaced short palindromic repeat), is an adaptive immune system that provides protection against mobile genetic elements (viruses, transposable elements and conjugative plasmids). CRISPR clusters contain spacers, sequences complementary to antecedent mobile elements, and target invading nucleic acids. CRISPR clusters are transcribed and processed into CRISPR RNA (crRNA). Acts as a dsDNA endonuclease. Involved in the integration of spacer DNA into the CRISPR cassette. This is CRISPR-associated endonuclease Cas1 1 from Pyrobaculum aerophilum (strain ATCC 51768 / DSM 7523 / JCM 9630 / CIP 104966 / NBRC 100827 / IM2).